The primary structure comprises 398 residues: Thyrotropin-releasing hormone receptor (398 aa).

Residues Met1–Thr28 lie on the Extracellular side of the membrane. N-linked (GlcNAc...) asparagine glycosylation is found at Asn3 and Asn10. Residues Ile29 to Met51 traverse the membrane as a helical segment. The Cytoplasmic portion of the chain corresponds to Arg52–Asn61. A helical transmembrane segment spans residues Cys62–Ile83. Residues Thr84–Leu99 are Extracellular-facing. Cys98 and Cys179 are joined by a disulfide. Residues Cys100–Ile121 form a helical membrane-spanning segment. Residues Glu122–Lys144 are Cytoplasmic-facing. A helical membrane pass occupies residues Ile145–Ile168. Residues Ser169–Leu193 are Extracellular-facing. The chain crosses the membrane as a helical span at residues Met194–Ala215. The Cytoplasmic portion of the chain corresponds to Arg216–Lys266. A helical membrane pass occupies residues Met267–Val288. Over Asn289–Phe296 the chain is Extracellular. A helical transmembrane segment spans residues Gln297–Ile319. Over Tyr320–Ser398 the chain is Cytoplasmic.

It belongs to the G-protein coupled receptor 1 family.

The protein resides in the cell membrane. Functionally, receptor for thyrotropin-releasing hormone (TRH). Upon ligand binding, this G-protein-coupled receptor triggers activation of the phosphatidylinositol (IP3)-calcium-protein kinase C (PKC) pathway. This is Thyrotropin-releasing hormone receptor (TRHR) from Ovis aries (Sheep).